A 324-amino-acid polypeptide reads, in one-letter code: Cyclin-dependent kinase C-3 (324 aa).

The 294-residue stretch at 27–320 (FRRIRKIGEG…AHDALCAAYF (294 aa)) folds into the Protein kinase domain. Residues 33-41 (IGEGTYGEV) and lysine 56 each bind ATP. A Phosphothreonine modification is found at threonine 37. Tyrosine 38 carries the phosphotyrosine modification. The Proton acceptor role is filled by aspartate 160. At threonine 193 the chain carries Phosphothreonine.

Belongs to the protein kinase superfamily. CMGC Ser/Thr protein kinase family. CDC2/CDKX subfamily.

The catalysed reaction is L-seryl-[protein] + ATP = O-phospho-L-seryl-[protein] + ADP + H(+). It carries out the reaction L-threonyl-[protein] + ATP = O-phospho-L-threonyl-[protein] + ADP + H(+). The enzyme catalyses [DNA-directed RNA polymerase] + ATP = phospho-[DNA-directed RNA polymerase] + ADP + H(+). The chain is Cyclin-dependent kinase C-3 (CDKC-1) from Oryza sativa subsp. japonica (Rice).